We begin with the raw amino-acid sequence, 710 residues long: Effector protein AvrPphD (710 aa).

Residues 1-15 (MNPLRSIQHNITTPP) are compositionally biased toward polar residues. 3 disordered regions span residues 1-36 (MNPL…HPKR), 136-155 (ISFD…SVLS), and 173-207 (SSSL…DSGS).

The protein localises to the secreted. In terms of biological role, effector protein involved in non-host recognition and able to elicit hypersensitive response (HR). In Pseudomonas savastanoi pv. phaseolicola (Pseudomonas syringae pv. phaseolicola), this protein is Effector protein AvrPphD (avrPphD).